The sequence spans 240 residues: Ribose-5-phosphate isomerase A (240 aa).

The segment at 1–23 (MKTSGGSDAAKRRAGESAAETVT) is disordered. Residues 32 to 35 (TGST), 92 to 95 (DGAD), and 111 to 114 (KGGG) each bind substrate. Catalysis depends on E120, which acts as the Proton acceptor. K138 provides a ligand contact to substrate.

The protein belongs to the ribose 5-phosphate isomerase family. Homodimer.

The catalysed reaction is aldehydo-D-ribose 5-phosphate = D-ribulose 5-phosphate. It participates in carbohydrate degradation; pentose phosphate pathway; D-ribose 5-phosphate from D-ribulose 5-phosphate (non-oxidative stage): step 1/1. Catalyzes the reversible conversion of ribose-5-phosphate to ribulose 5-phosphate. The chain is Ribose-5-phosphate isomerase A from Halorubrum lacusprofundi (strain ATCC 49239 / DSM 5036 / JCM 8891 / ACAM 34).